The following is a 200-amino-acid chain: Integrin beta-1-binding protein 1 (200 aa).

Residues 1 to 10 (MFRKGKKRHS) show a composition bias toward basic residues. The tract at residues 1 to 55 (MFRKGKKRHSSSSSQSSEISTKSKSVDSSLGGLSRSSTVASLDTDSTKSSGQSNS) is disordered. The short motif at 6–7 (KK) is the Nuclear localization signal element. The span at 11 to 29 (SSSSQSSEISTKSKSVDSS) shows a compositional bias: low complexity. A compositionally biased stretch (polar residues) spans 34 to 55 (SRSSTVASLDTDSTKSSGQSNS). At threonine 38 the chain carries Phosphothreonine; by CaMK2. Serine 41 carries the phosphoserine modification. The region spanning 58 to 200 (DTCAEFRIKY…FDSVLTSDKS (143 aa)) is the PID domain. The segment at 136 to 139 (YLII) is interaction with KRIT1. The tract at residues 139–141 (IRM) is interaction with ITGB1.

Found in a complex, at least composed of ITGB1BP1, KRIT1 and RAP1A. Interacts (via C-terminal region) with ITGB1 (via C-terminal cytoplasmic tail); the interaction prevents talin TLN1 binding to ITGB1 and KRIT1 and ITGB1 compete for the same binding site. Interacts with KRIT1 (via N-terminal NPXY motif); the interaction induces the opening conformation of KRIT1 and KRIT1 and ITGB1 compete for the same binding site. Isoform 2 does not interact with ITGB1. Interacts with CDC42 (GTP- or GDP-bound form); the interaction is increased with the CDC42-membrane bound forms and prevents both CDC42 activation and cell spreading. Interacts (via C-terminal domain region) with NME2. Interacts with FERMT2 and RAC1. Interacts (via N-terminus and PTB domain) with ROCK1. Post-translationally, phosphorylation at Thr-38 seems to enhance integrin alpha5beta1-mediated cell adhesion. The degree of phosphorylation is regulated by integrin-dependent cell-matrix interaction. Expressed in the brain.

The protein resides in the nucleus. The protein localises to the cytoplasm. Its subcellular location is the cytoskeleton. It localises to the cell membrane. It is found in the cell projection. The protein resides in the lamellipodium. The protein localises to the ruffle. Functionally, key regulator of the integrin-mediated cell-matrix interaction signaling by binding to the ITGB1 cytoplasmic tail and preventing the activation of integrin alpha-5/beta-1 (heterodimer of ITGA5 and ITGB1) by talin or FERMT1. Plays a role in cell proliferation, differentiation, spreading, adhesion and migration in the context of mineralization and bone development and angiogenesis. Stimulates cellular proliferation in a fibronectin-dependent manner. Involved in the regulation of beta-1 integrin-containing focal adhesion (FA) site dynamics by controlling its assembly rate during cell adhesion; inhibits beta-1 integrin clustering within FA by directly competing with talin TLN1, and hence stimulates osteoblast spreading and migration in a fibronectin- and/or collagen-dependent manner. Acts as a guanine nucleotide dissociation inhibitor (GDI) by regulating Rho family GTPases during integrin-mediated cell matrix adhesion; reduces the level of active GTP-bound form of both CDC42 and RAC1 GTPases upon cell adhesion to fibronectin. Stimulates the release of active CDC42 from the membranes to maintain it in an inactive cytoplasmic pool. Participates in the translocation of the Rho-associated protein kinase ROCK1 to membrane ruffles at cell leading edges of the cell membrane, leading to an increase of myoblast cell migration on laminin. Plays a role in bone mineralization at a late stage of osteoblast differentiation; modulates the dynamic formation of focal adhesions into fibrillar adhesions, which are adhesive structures responsible for fibronectin deposition and fibrillogenesis. Plays a role in blood vessel development; acts as a negative regulator of angiogenesis by attenuating endothelial cell proliferation and migration, lumen formation and sprouting angiogenesis by promoting AKT phosphorylation and inhibiting ERK1/2 phosphorylation through activation of the Notch signaling pathway. Promotes transcriptional activity of the MYC promoter. The protein is Integrin beta-1-binding protein 1 (Itgb1bp1) of Mus musculus (Mouse).